The following is a 245-amino-acid chain: PF03932 family protein CutC (245 aa).

The protein belongs to the CutC family.

The protein localises to the cytoplasm. The polypeptide is PF03932 family protein CutC (Photobacterium profundum (strain SS9)).